A 962-amino-acid chain; its full sequence is Insulin-degrading enzyme homolog (962 aa).

Low complexity predominate over residues methionine 1 to glutamine 10. Residues methionine 1–isoleucine 21 form a disordered region. Histidine 74 provides a ligand contact to Zn(2+). The Proton acceptor role is filled by glutamate 77. The Zn(2+) site is built by histidine 78 and glutamate 155.

Belongs to the peptidase M16 family. In terms of assembly, homodimer. It depends on Zn(2+) as a cofactor.

It is found in the cytoplasm. The protein is Insulin-degrading enzyme homolog of Dictyostelium discoideum (Social amoeba).